The primary structure comprises 347 residues: Photosystem II assembly protein Ycf48 (347 aa).

Residues 1–38 form the signal peptide; that stretch reads MFAKQIDIHWQKMKGIKFLHWLLGTVLLWVSLSTPALA. Residues 202–226 carry the Arg-rich patch motif; sequence RGSFYSTWEPGQTAWEPHNRTTSRR.

This sequence belongs to the Ycf48 family. As to quaternary structure, interacts with the D1 protein (crystallized with PsbA1 or PsbA3), via the latter's C-terminal prepropeptide, may interact with parts of the mature D1 protein as well.

Its subcellular location is the cellular thylakoid lumen. A factor required for optimal assembly of photosystem II (PSII), acting in the early stages of PSII assembly. Also plays a role in replacement of photodamaged D1 (psbA). Assists YidC in synthesis of chlorophyll-binding proteins. This Thermosynechococcus vestitus (strain NIES-2133 / IAM M-273 / BP-1) protein is Photosystem II assembly protein Ycf48.